Consider the following 288-residue polypeptide: Beta-lactamase PSE-4 (288 aa).

Residues 1–17 (MKFLLAFSLLIPSVVFA) form the signal peptide. Serine 65 functions as the Acyl-ester intermediate in the catalytic mechanism. Cysteine 72 and cysteine 118 are joined by a disulfide. 229–231 (RSG) serves as a coordination point for substrate.

Belongs to the class-A beta-lactamase family.

The enzyme catalyses a beta-lactam + H2O = a substituted beta-amino acid. Hydrolyzes both carbenicillin and oxacillin. The sequence is that of Beta-lactamase PSE-4 (pse4) from Pseudomonas aeruginosa.